Consider the following 581-residue polypeptide: Probable CDP-diacylglycerol--glycerol-3-phosphate 3-phosphatidyltransferase (581 aa).

The disordered stretch occupies residues Arg27–Lys65. Residues Ser44 to Lys65 are compositionally biased toward low complexity. Ala160–Ser167 provides a ligand contact to ATP. 2 consecutive PLD phosphodiesterase domains span residues Thr248–Tyr274 and Asp487–Ser520. Residues His253, Lys255, and Asp260 contribute to the active site.

It belongs to the CDP-alcohol phosphatidyltransferase class-II family.

It catalyses the reaction a CDP-1,2-diacyl-sn-glycerol + sn-glycerol 3-phosphate = a 1,2-diacyl-sn-glycero-3-phospho-(1'-sn-glycero-3'-phosphate) + CMP + H(+). Its pathway is phospholipid metabolism; phosphatidylglycerol biosynthesis; phosphatidylglycerol from CDP-diacylglycerol: step 1/2. Functionally, functions in the biosynthesis of the anionic phospholipids phosphatidylglycerol and cardiolipin. The polypeptide is Probable CDP-diacylglycerol--glycerol-3-phosphate 3-phosphatidyltransferase (pgs1) (Dictyostelium discoideum (Social amoeba)).